The chain runs to 709 residues: ATP-dependent RNA helicase dbp7 (709 aa).

The segment at 13–90 (DNAQSRKPEA…KPAHELKGNK (78 aa)) is disordered. The span at 16-34 (QSRKPEALKSSRRWTDRAR) shows a compositional bias: basic and acidic residues. Over residues 44 to 65 (NESSKSTVKRNSGTNGASTDYK) the composition is skewed to polar residues. The segment covering 66–90 (NSQKEKVINPVFDPRKPAHELKGNK) has biased composition (basic and acidic residues). Residues 138 to 167 (TNFAGVQLDTQLADHLNNKMNISAPTAIQS) carry the Q motif motif. In terms of domain architecture, Helicase ATP-binding spans 172-366 (ALLNTDDKDA…DSALKDALYL (195 aa)). 185-192 (AQTGSGKT) contributes to the ATP binding site. The DEAD box motif lies at 301–304 (DEGD). In terms of domain architecture, Helicase C-terminal spans 404 to 580 (LLRSHVRSYK…EQPNGPSGLL (177 aa)). Residues 662–690 (GKISGANSSKPRKQGGSVDKGKSKSSKDI) form a disordered region.

Belongs to the DEAD box helicase family. DDX31/DBP7 subfamily.

It is found in the nucleus. It localises to the nucleolus. It catalyses the reaction ATP + H2O = ADP + phosphate + H(+). Functionally, ATP-binding RNA helicase involved in the biogenesis of 60S ribosomal subunits and is required for the normal formation of 25S and 5.8S rRNAs. This is ATP-dependent RNA helicase dbp7 (dbp7) from Schizosaccharomyces pombe (strain 972 / ATCC 24843) (Fission yeast).